The primary structure comprises 225 residues: uncharacterized protein (225 aa).

A signal peptide spans 1 to 22 (MLQHYSVSWKKGLAALCLLAVA). The 30-residue stretch at 161–190 (GNLTAAEEKKTGCLVCLDSCPVGIVSNATY) folds into the 4Fe-4S ferredoxin-type domain.

This is an uncharacterized protein from Escherichia coli (strain K12).